The following is an 835-amino-acid chain: Ribonuclease R (835 aa).

Positions arginine 267 to isoleucine 593 constitute an RNB domain. The S1 motif domain occupies glycine 652–valine 733. Basic and acidic residues predominate over residues leucine 739–lysine 754. Positions leucine 739 to glutamine 835 are disordered. Residues arginine 755–alanine 764 are compositionally biased toward basic residues. Positions threonine 765–alanine 777 are enriched in low complexity. Residues proline 783–glycine 793 are compositionally biased toward basic and acidic residues. Over residues lysine 809 to arginine 829 the composition is skewed to basic residues.

Belongs to the RNR ribonuclease family. RNase R subfamily.

The protein localises to the cytoplasm. The catalysed reaction is Exonucleolytic cleavage in the 3'- to 5'-direction to yield nucleoside 5'-phosphates.. In terms of biological role, 3'-5' exoribonuclease that releases 5'-nucleoside monophosphates and is involved in maturation of structured RNAs. This chain is Ribonuclease R, found in Vibrio parahaemolyticus serotype O3:K6 (strain RIMD 2210633).